The chain runs to 798 residues: MAWDMCNQDSESVWSDIECAALVGEDQPLCPDLPELDLSELDVNDLDTDSFLGGLKWCSDQSEIISNQYNNEPSNIFEKIDEENEANLLAVLTETLDSLPVDEDGLPSFDALTDGDVTTDNEASPSSMPDGTPPPQEAEEPSLLKKLLLAPANTQLSYNECSGLSTQNHANHNHRIRTNPAIVKTENSWSNKAKSICQQQKPQRRPCSELLKYLTTNDDPPHTKPTENRNSSRDKCTSKKKSHTQSQSQHLQAKPTTLSLPLTPESPNDPKGSPFENKTIERTLSVELSGTAGLTPPTTPPHKANQDNPFRASPKLKSSCKTVVPPPSKKPRYSESSGTQGNNSTKKGPEQSELYAQLSKSSVLTGGHEERKTKRPSLRLFGDHDYCQSINSKTEILINISQELQDSRQLENKDVSSDWQGQICSSTDSDQCYLRETLEASKQVSPCSTRKQLQDQEIRAELNKHFGHPSQAVFDDEADKTGELRDSDFSNEQFSKLPMFINSGLAMDGLFDDSEDESDKLSYPWDGTQSYSLFNVSPSCSSFNSPCRDSVSPPKSLFSQRPQRMRSRSRSFSRHRSCSRSPYSRSRSRSPGSRSSSRSCYYYESSHYRHRTHRNSPLYVRSRSRSPYSRRPRYDSYEEYQHERLKREEYRREYEKRESERAKQRERQRQKAIEERRVIYVGKIRPDTTRTELRDRFEVFGEIEECTVNLRDDGDSYGFITYRYTCDAFAALENGYTLRRSNETDFELYFCGRKQFFKSNYADLDSNSDDFDPASTKSKYDSLDFDSLLKEAQRSLRR.

An N6-acetyllysine modification is found at K79. Residues 100–140 (PVDEDGLPSFDALTDGDVTTDNEASPSSMPDGTPPPQEAEE) are disordered. Residues 116 to 129 (DVTTDNEASPSSMP) show a composition bias toward polar residues. Residues 144 to 148 (LKKLL) carry the LXXLL motif motif. The residue at position 146 (K146) is an N6-acetyllysine. T178 carries the phosphothreonine; by AMPK modification. The residue at position 184 (K184) is an N6-acetyllysine. The segment at 213–277 (YLTTNDDPPH…NDPKGSPFEN (65 aa)) is disordered. The span at 219–237 (DPPHTKPTENRNSSRDKCT) shows a compositional bias: basic and acidic residues. 4 positions are modified to N6-acetyllysine: K254, K271, K278, and K321. The interval 290–351 (GTAGLTPPTT…NNSTKKGPEQ (62 aa)) is disordered. The interval 293–339 (GLTPPTTPPHKANQDNPFRASPKLKSSCKTVVPPPSKKPRYSESSGT) is interaction with PPARG. The span at 334–346 (SESSGTQGNNSTK) shows a compositional bias: polar residues. K347, K413, K442, and K451 each carry N6-acetyllysine. The segment at 350–798 (EQSELYAQLS…LKEAQRSLRR (449 aa)) is mediates interaction with RNF34. At S539 the chain carries Phosphoserine; by AMPK. Disordered stretches follow at residues 542 to 599 (SFNS…SSRS), 613 to 639 (HRNS…SYEE), and 650 to 669 (YRRE…ERQR). The segment covering 563 to 578 (QRMRSRSRSFSRHRSC) has biased composition (basic residues). Over residues 579–599 (SRSPYSRSRSRSPGSRSSSRS) the composition is skewed to low complexity. The segment covering 622–631 (SRSRSPYSRR) has biased composition (basic residues). In terms of domain architecture, RRM spans 677 to 753 (RVIYVGKIRP…TDFELYFCGR (77 aa)). An N6-acetyllysine mark is found at K758 and K779.

Homooligomer. Interacts with MYBBP1A; inhibits MYBBP1A transcriptional activation. Interacts with PRDM16, LPIN1 and PML. Interacts (via LXXLL motif) with RORA and RORC (via AF-2 motif); activates RORA and RORC transcriptional activation. Interacts with LRPPRC. Interacts with FOXO1. Interacts with NR5A2. Phosphorylation by AMPK in skeletal muscle increases activation of its own promoter. Phosphorylated by CLK2. In terms of processing, heavily acetylated by KAT2A/GCN5 under conditions of high nutrients, leading to inactivation of PPARGC1A. Deacetylated by SIRT1 in low nutrients/high NAD conditions, leading to its activation. Post-translationally, ubiquitinated. Ubiquitination by RNF34 induces proteasomal degradation. Heart, skeletal muscle, liver and kidney. Expressed at lower levels in brain and pancreas and at very low levels in the intestine and white adipose tissue. In skeletal muscle, levels were lower in obese than in lean subjects and fasting induced a 2-fold increase in levels in the skeletal muscle in obese subjects.

The protein resides in the nucleus. It is found in the PML body. The protein localises to the cytoplasm. Functionally, transcriptional coactivator for steroid receptors and nuclear receptors. Greatly increases the transcriptional activity of PPARG and thyroid hormone receptor on the uncoupling protein promoter. Can regulate key mitochondrial genes that contribute to the program of adaptive thermogenesis. Plays an essential role in metabolic reprogramming in response to dietary availability through coordination of the expression of a wide array of genes involved in glucose and fatty acid metabolism. Acts as a key regulator of gluconeogenesis: stimulates hepatic gluconeogenesis by increasing the expression of gluconeogenic enzymes, and acting together with FOXO1 to promote the fasting gluconeogenic program. Induces the expression of PERM1 in the skeletal muscle in an ESRRA-dependent manner. Also involved in the integration of the circadian rhythms and energy metabolism. Required for oscillatory expression of clock genes, such as BMAL1 and NR1D1, through the coactivation of RORA and RORC, and metabolic genes, such as PDK4 and PEPCK. The sequence is that of Peroxisome proliferator-activated receptor gamma coactivator 1-alpha (PPARGC1A) from Homo sapiens (Human).